Here is a 423-residue protein sequence, read N- to C-terminus: MDPDEVNQALGHYLNDSESGELVVEDSTTVQVTNPEARKTGDKIEVYYSRKTTVVSPTNSDDEEGEFCSDSELLPAQGGHRSRATSFAGRVRAGSDDEMNPKHTVLRYRRKKGGQWREVNAQGTPDKRKDDEDELEVDVKEDRSEQTGIVTKTYEARWKVLKYEHLPEWLQDNEFLRHGHRPPLPSFAECFKSIWSLHTETGNIWTHLIGCVAFFLLACWFLTRPDNHIQFQEKVVFSFFFAGAVSVSDSRSPSTPSRVIRSTSSRYSANSTIWESRCSLSARLFQPKITYIAMVCVLGIGAIVVSLWDKFSESKYRPVRAAVFVGMGCSGVIPTIHYIITDGVHSLFADNSFHWLLLMAFLYLLGAALYATRTPERFFPGKCDIWFQSHQLFHTCVVIAAFVHYYGISEMAFARLNEQCPVR.

The Cytoplasmic portion of the chain corresponds to 1-201 (MDPDEVNQAL…KSIWSLHTET (201 aa)). A disordered region spans residues 54–140 (VVSPTNSDDE…DEDELEVDVK (87 aa)). The span at 60–69 (SDDEEGEFCS) shows a compositional bias: acidic residues. Residues 104 to 114 (TVLRYRRKKGG) are compositionally biased toward basic residues. Residues 202–222 (GNIWTHLIGCVAFFLLACWFL) form a helical membrane-spanning segment. Over 223 to 234 (TRPDNHIQFQEK) the chain is Extracellular. Residues 235-252 (VVFSFFFAGAVSVSDSRS) traverse the membrane as a helical segment. Residues 253–288 (PSTPSRVIRSTSSRYSANSTIWESRCSLSARLFQPK) are Cytoplasmic-facing. Residues 289 to 309 (ITYIAMVCVLGIGAIVVSLWD) traverse the membrane as a helical segment. The Extracellular segment spans residues 310 to 320 (KFSESKYRPVR). The helical transmembrane segment at 321–341 (AAVFVGMGCSGVIPTIHYIIT) threads the bilayer. The Cytoplasmic segment spans residues 342 to 351 (DGVHSLFADN). Residues 352 to 372 (SFHWLLLMAFLYLLGAALYAT) form a helical membrane-spanning segment. The Extracellular segment spans residues 373-392 (RTPERFFPGKCDIWFQSHQL). A helical transmembrane segment spans residues 393-413 (FHTCVVIAAFVHYYGISEMAF). Residues 414–423 (ARLNEQCPVR) lie on the Cytoplasmic side of the membrane.

This sequence belongs to the ADIPOR family.

It is found in the membrane. Its function is as follows. Probable receptor, which may be involved in metabolic pathways that regulate lipid metabolism such as fatty acid oxidation. In Caenorhabditis briggsae, this protein is Progestin and adipoQ receptor-like protein 1.